The chain runs to 126 residues: Large ribosomal subunit protein eL18 (126 aa).

It belongs to the eukaryotic ribosomal protein eL18 family.

This chain is Large ribosomal subunit protein eL18, found in Methanosarcina acetivorans (strain ATCC 35395 / DSM 2834 / JCM 12185 / C2A).